The chain runs to 268 residues: Photosystem II 22 kDa protein 1, chloroplastic (268 aa).

A chloroplast-targeting transit peptide spans 1–60; that stretch reads MAQSMLVSGANGTVAAASTSRLQPVRPTPFSRLVLSQPSSSLGRAVSVKTVALFGRSKTK. 2 consecutive repeat copies span residues 54 to 161 and 164 to 268. Helical transmembrane passes span 99–119, 133–153, 199–219, and 234–254; these read VAML…KGIL, AEPL…GALG, LFVG…EIIT, and PINE…IAAI.

It belongs to the ELIP/psbS family. As to expression, expressed at low levels in leaves (at protein level).

It is found in the plastid. The protein resides in the chloroplast thylakoid membrane. In terms of biological role, involved in high light-mediated energy-dependent nonphotochemical quenching (NPQ, qE) and thermal dissipation (TD) thus regulating energy conversion in photosystem II and protecting from photoinhibition. Also seems to regulate quantum yield of electron transport in fluctuating light conditions. The polypeptide is Photosystem II 22 kDa protein 1, chloroplastic (Oryza sativa subsp. indica (Rice)).